Reading from the N-terminus, the 344-residue chain is Laforin, isoform 9 (344 aa).

Disordered stretches follow at residues 1-44, 58-134, 158-188, and 320-344; these read MHPK…PGPG, GGGA…PRGH, PAPGAERELRPAPPTGASASGRPRRPRRRAS, and SLKKTQNDPTNETSVFANPRQQCAT. Residues 77–88 are compositionally biased toward low complexity; the sequence is AARAGALGAARC. Gly residues predominate over residues 101 to 131; the sequence is RGPGPAGAGPVARGGGAGGRGGGAGRGGAGP. The segment covering 179–188 has biased composition (basic residues); it reads RPRRPRRRAS.

In terms of assembly, interacts with isoform 1 and isoform 2.

It is found in the nucleus. This is Laforin, isoform 9 from Homo sapiens (Human).